The sequence spans 604 residues: Numb-like protein (604 aa).

Disordered stretches follow at residues 1-68 (MSRS…QWQA), 223-283 (GSFR…PVAA), 372-457 (ASAG…TLQP), and 531-604 (KAGA…EIEL). Residues 74-225 (RKGTCSFPVR…RTSFAREGSF (152 aa)) form the PID domain. Phosphoserine occurs at positions 224 and 228. The segment covering 233–245 (PAEREAGDKKKAE) has biased composition (basic and acidic residues). Residues 246–260 (AAAAPAVAPGPAQPG) show a composition bias toward low complexity. Position 263 is a phosphoserine (Ser-263). Thr-279 is modified (phosphothreonine). Residues 409-418 (TPSEAERWLE) show a composition bias toward basic and acidic residues. A Phosphoserine modification is found at Ser-411. 2 stretches are compositionally biased toward low complexity: residues 427–441 (QQQQ…QQQQ) and 542–552 (SAPGGQARPRP). Residues 553 to 568 (NGAPWPPEPAPAPAPE) show a composition bias toward pro residues.

Interacts (via PTB domain) with MAP3K7IP2 (via C-terminal). Interacts (via C-terminal) with TRAF6 (via TRAF domains). Associates with EPS15 and NOTCH1. Preferentially expressed in the nervous system. In the developing neocortex, expressed in postmitotic neurons in the cortical plate but not in progenitors within the ventricular zone.

It localises to the cytoplasm. Functionally, plays a role in the process of neurogenesis. Required throughout embryonic neurogenesis to maintain neural progenitor cells, also called radial glial cells (RGCs), by allowing their daughter cells to choose progenitor over neuronal cell fate. Not required for the proliferation of neural progenitor cells before the onset of embryonic neurogenesis. Also required postnatally in the subventricular zone (SVZ) neurogenesis by regulating SVZ neuroblasts survival and ependymal wall integrity. Negative regulator of NF-kappa-B signaling pathway. The inhibition of NF-kappa-B activation is mediated at least in part, by preventing MAP3K7IP2 to interact with polyubiquitin chains of TRAF6 and RIPK1 and by stimulating the 'Lys-48'-linked polyubiquitination and degradation of TRAF6 in cortical neurons. This Mus musculus (Mouse) protein is Numb-like protein (Numbl).